Here is an 894-residue protein sequence, read N- to C-terminus: CWF19-like protein 2 (894 aa).

Residues 1–147 are disordered; that stretch reads MATSMAAASG…DEKSGKDDTQ (147 aa). Over residues 13 to 56 the composition is skewed to basic and acidic residues; sequence ESAKSIEERKEQTRNARAEVLRQAKANFEKEERRKELKRLRGED. Residues 13 to 107 are a coiled coil; that stretch reads ESAKSIEERK…KKQKYEKNNE (95 aa). At serine 75 the chain carries Phosphoserine. The segment covering 76 to 99 has biased composition (basic residues); the sequence is VKKKKKKDKHSKKAKKEKKKKSKK. Positions 128–147 are enriched in basic and acidic residues; it reads PDKEKAWKVKDEKSGKDDTQ. Positions 166 to 281 form a coiled coil; it reads SSSSLKAEKE…AEKAASTKED (116 aa). Lysine 171 participates in a covalent cross-link: Glycyl lysine isopeptide (Lys-Gly) (interchain with G-Cter in SUMO2). Positions 270–284 are enriched in basic and acidic residues; sequence EDAEKAASTKEDYRR. Residues 270 to 483 are disordered; it reads EDAEKAASTK…STFAGSPERE (214 aa). The span at 320-330 shows a compositional bias: polar residues; it reads TTDTAKNSNNE. A compositionally biased stretch (basic and acidic residues) spans 332–352; sequence FIGDEKDKRPGSLETCRRESN. Serine 360 and serine 372 each carry phosphoserine. 2 stretches are compositionally biased toward basic and acidic residues: residues 410-430 and 440-473; these read KNSE…DKKH and TDEH…RDTK. Serine 479 and serine 484 each carry phosphoserine. The stretch at 502–530 forms a coiled coil; that stretch reads KAEMMGNMELAEQLKVQLEKANKFKETIT. Residues 561–583 form a disordered region; the sequence is NTPGKSLESQGGRRKRQMVSTHE. A Glycyl lysine isopeptide (Lys-Gly) (interchain with G-Cter in SUMO2) cross-link involves residue lysine 604. A coiled-coil region spans residues 644–675; that stretch reads AAERERLGEEEENQRKKAIAEHRSLAAQMEKC.

Belongs to the CWF19 family.

The chain is CWF19-like protein 2 (CWF19L2) from Homo sapiens (Human).